Consider the following 121-residue polypeptide: Large ribosomal subunit protein bL19 (121 aa).

Belongs to the bacterial ribosomal protein bL19 family.

In terms of biological role, this protein is located at the 30S-50S ribosomal subunit interface and may play a role in the structure and function of the aminoacyl-tRNA binding site. The protein is Large ribosomal subunit protein bL19 of Chlorobaculum tepidum (strain ATCC 49652 / DSM 12025 / NBRC 103806 / TLS) (Chlorobium tepidum).